The sequence spans 389 residues: S-adenosylmethionine synthase (389 aa).

An ATP-binding site is contributed by His-15. Residue Asp-17 coordinates Mg(2+). Residue Glu-43 participates in K(+) binding. Positions 56 and 99 each coordinate L-methionine. Residues 99–109 are flexible loop; sequence QSPDIAQGVNE. ATP-binding positions include 166-168, 234-235, Asp-243, 249-250, Ala-266, and Lys-270; these read DAK, RF, and RK. Asp-243 serves as a coordination point for L-methionine. Position 274 (Lys-274) interacts with L-methionine.

Belongs to the AdoMet synthase family. As to quaternary structure, homotetramer; dimer of dimers. Mg(2+) is required as a cofactor. Requires K(+) as cofactor.

Its subcellular location is the cytoplasm. It carries out the reaction L-methionine + ATP + H2O = S-adenosyl-L-methionine + phosphate + diphosphate. Its pathway is amino-acid biosynthesis; S-adenosyl-L-methionine biosynthesis; S-adenosyl-L-methionine from L-methionine: step 1/1. Functionally, catalyzes the formation of S-adenosylmethionine (AdoMet) from methionine and ATP. The overall synthetic reaction is composed of two sequential steps, AdoMet formation and the subsequent tripolyphosphate hydrolysis which occurs prior to release of AdoMet from the enzyme. The chain is S-adenosylmethionine synthase from Neisseria meningitidis serogroup C / serotype 2a (strain ATCC 700532 / DSM 15464 / FAM18).